We begin with the raw amino-acid sequence, 2532 residues long: MTPLDAPGAPAPIAMVGMGCRFGGGATDPQKLWKLLEEGGSAWSKIPPSRFNVGGVYHPNGQRVGSMHVRGGHFLDEDPALFDASFFNMSTEVASCMDPQYRLILEVVYEALEAAGIPLEQVSGSKTGVFAGTMYHDYQGSFQRQPEALPRYFITGNAGTMLANRVSHFYDLRGPSVSIDTACSTTLTALHLAIQSLRAGESDMAIVAGANLLLNPDVFTTMSNLGFLSSDGISYSFDSRADGYGRGEGVAAIVLKTLPDAVRDGDPIRLIVRETAINQDGRTPAISTPSGEAQECLIQDCYQKAQLDPKQTSYVEAHGTGTRAGDPLELAVISAAFPGQQIQVGSVKANIGHTEAVSGLASLIKVALAVEKGVIPPNARFLQPSKKLLKDTHIQIPLCSQSWIPTDGVRRASINNFGFGGANAHAIVEQYGPFAETSICPPNGYSGNYDGNLGTDQAHIYVLSAKDENSCMRMVSRLCDYATHARPADDLQLLANIAYTLGSRRSNFRWKAVCTAHSLTGLAQNLAGEGMRPSKSADQVRLGWVFTGQGAQWFAMGRELIEMYPVFKEALLECDGYIKEMGSTWSIIEELSRPETESRVDQAEFSLPLSTALQIALVRLLWSWNIQPVAVTSHSSGEAAAAYAIGALTARSAIGISYIRGALTARDRLASVHKGGMLAVGLSRSEVGIYIRQVPLQSEECLVVGCVNSPSSVTVSGDLSAIAKLEELLHADRIFARRLKVTQAFHSSHMNSMTDAFRAGLTELFGADPSDAANASKDVIYASPRTGARLHDMNRLRDPIHWVECMLHPVEFESAFRRMCLDENDHMPKVDRVIEIGPHGALGGPIKQIMQLPELATCDIPYLSCLSRGKSSLSTLRLLASELIRAGFPVDLNAINFPRGCEAARVQVLSDLPPYPWNHETRYWKEPRISQSARQRKGPVHDLIGLQEPLNLPLARSWHNVLRVSDLPWLRDHVVGSHIVFPGAGFVCMAVMGISTLCSSDHESDDISYILRDVNFAQALILPADGEEGIDLRLTICAPDQSLGSQDWQRFLVHSITADKNDWTEHCTGLVRAEMDQPPSSLSNQQRIDPRPWSRKTAPQELWDSLHRVGIRHGPFFRNITCIESDGRGSWCTFAIADTASAMPHAYESQHIVHPTTLDSAVQAAYTTLPFAGSRIKSAMVPARVGCMKISSRLADLEARDMLRAQAKMHSQSPSALVTDVAVFDEADPVGGPVMELEGLVFQSLGASLGTSDRDSTDPGNTCSSWHWAPDISLVNPGWLEKTLGTGIQEHEISLILELRRCSVHFIQEAMESLSVGDVERLSGHLAKFYAWMQKQLACAQNGELGPESSSWTRDSEQARCSLRSRVVAGSTNGEMICRLGSVLPAILRREVDPLEVMMDGHLLSRYYVDALKWSRSNAQASELVRLCCHKNPRARILEIGGGTGGCTQLVVDSLGPNPPVGRYDFTDVSAGFFEAARKRFAGWQNVMDFRKLDIEDDPEAQGFVCGSYDVVLACQVLHATSNMQRTLTNVRKLLKPGGKLILVETTRDELDLFFTFGLLPGWWLSEEPERQSTPSLSPTMWRSMLHTTGFNGVEVEARDCDSHEFYMISTMMSTAVQATPMSCSVKLPEVLLVYVDSSTPMSWISDLQGEIRGRNCSVTSLQALRQVPPTEGQICVFLGEVEHSMLGSVTNDDFTLLTSMLQLAGGTLWVTQGATMKSDDPLKALHLGLLRTMRNESHGKRFVSLDLDPSRNPWTGDSRDAIVSVLDLISMSDEKEFDYAERDGVIHVPRAFSDSINGGEEDGYALEPFQDSQHLLRLDIQTPGLLDSLHFTKRNVDTYEPDKLPDDWVEIEPRAFGLNFRDIMVAMGQLESNVMGFECAGVVTSLSETARTIAPGLAVGDRVCALMNGHWASRVTTSRTNVVRIPETLSFPHAASIPLAFTTAYISLYTVARILPGETVLIHAGAGGVGQAAIILAQLTGAEVFTTAGSETKRNLLIDKFHLDPDHVFSSRDSSFVDGIKTRTRGKGVDVVLNSLAGPLLQKSFDCLARFGRFVEIGKKDLEQNSRLDMSTFVRNVSFSSVDILYWQQAKPAEIFQAMSEVILLWERTAIGLIHPISEYPMSALEKAFRTMQSGQHVGKIVVTVAPDDAVLVRQERMPLFLKPNVSYLVAGGLGGIGRRICEWLVDRGARYLIILSRTARVDPVVTSLQERGCTVSVQACDVADESQLEAALQQCRAEEMPPIRGVIQGAMVLKDALVSQMTADGFHAALRPKVQGSWNLHRIASDVDFFVMLSSLVGVMGGAGQANYAAAGAFQDALAEHRMAHNQPAVTIDLGMVQSIGYVAETDSAVAERLQRIGYQPLHEEEVLDVLEQAISPVCSPAAPTRPAVIVTGINTRPGPHWAHADWMQEARFAGIKYRDPLRDNHGALSLTPAEDDNLHARLNRAISQQESIAVIMEAMSCKLISMFGLTDSEMSATQTLAGIGVDSLVAIELRNWITAKFNVDISVFELMEGRTIAKVAEVVLQRYKA.

A Ketosynthase family 3 (KS3) domain is found at 10–430 (PAPIAMVGMG…GANAHAIVEQ (421 aa)). Active-site for beta-ketoacyl synthase activity residues include cysteine 183, histidine 318, and histidine 353. The interval 545 to 870 (VFTGQGAQWF…PYLSCLSRGK (326 aa)) is malonyl-CoA:ACP transacylase (MAT) domain. Serine 635 functions as the For malonyltransferase activity in the catalytic mechanism. Positions 941 to 1078 (HDLIGLQEPL…GLVRAEMDQP (138 aa)) are N-terminal hotdog fold. Positions 941-1246 (HDLIGLQEPL…LEGLVFQSLG (306 aa)) are dehydratase (DH) domain. One can recognise a PKS/mFAS DH domain in the interval 941 to 1251 (HDLIGLQEPL…FQSLGASLGT (311 aa)). Histidine 973 acts as the Proton acceptor; for dehydratase activity in catalysis. Positions 1075–1094 (MDQPPSSLSNQQRIDPRPWS) are disordered. Positions 1078-1087 (PPSSLSNQQR) are enriched in polar residues. Positions 1092 to 1251 (PWSRKTAPQE…FQSLGASLGT (160 aa)) are C-terminal hotdog fold. Catalysis depends on aspartate 1159, which acts as the Proton donor; for dehydratase activity. The interval 1423-1607 (ELVRLCCHKN…ARDCDSHEFY (185 aa)) is methyltransferase (CMet) domain. The interval 1825–2144 (GLLDSLHFTK…SGQHVGKIVV (320 aa)) is enoylreductase (ER) domain. Residues 2168-2340 (SYLVAGGLGG…AVTIDLGMVQ (173 aa)) are ketoreductase (KR) domain. The region spanning 2453 to 2530 (ESIAVIMEAM…KVAEVVLQRY (78 aa)) is the Carrier domain. Serine 2490 carries the O-(pantetheine 4'-phosphoryl)serine modification.

As to quaternary structure, interacts with LovD. The cofactor is pantetheine 4'-phosphate.

It catalyses the reaction holo-[2-methylbutanoate polyketide synthase] + 2 malonyl-CoA + S-adenosyl-L-methionine + 2 NADPH + 3 H(+) = (S)-2-methylbutanoyl-[2-methylbutanoate polyketide synthase] + S-adenosyl-L-homocysteine + 2 CO2 + 2 NADP(+) + 2 CoA + H2O. Its pathway is polyketide biosynthesis; lovastatin biosynthesis. In terms of biological role, lovastatin diketide synthase; part of the gene cluster that mediates the biosynthesis of lovastatin (also known as mevinolin, mevacor or monacolin K), a hypolipidemic inhibitor of (3S)-hydroxymethylglutaryl-coenzyme A (HMG-CoA) reductase (HMGR). The first step in the biosynthesis of lovastatin is the production of dihydromonacolin L acid by the lovastatin nonaketide synthase lovB and the trans-acting enoyl reductase lovC via condensation of one acetyl-CoA unit and 8 malonyl-CoA units. Dihydromonacolin L acid is released from lovB by the thioesterase lovG. Next, dihydromonacolin L acid is oxidized by the dihydromonacolin L monooxygenase lovA twice to form monacolin J acid. The 2-methylbutyrate moiety of lovastatin is synthesized by the lovastatin diketide synthase lovF via condensation of one acetyl-CoA unit and one malonyl-CoA unit. Finally, the covalent attachment of this moiety to monacolin J acid is catalyzed by the transesterase lovD to yield lovastatin. LovD has broad substrate specificity and can also convert monacolin J to simvastatin using alpha-dimethylbutanoyl-S-methyl-3-mercaptopropionate (DMB-S-MMP) as the thioester acyl donor, and can also catalyze the reverse reaction and function as hydrolase in vitro. LovD has much higher activity with LovF-bound 2-methylbutanoate than with free diketide substrates. This is Lovastatin diketide synthase lovF from Aspergillus terreus.